Here is a 1033-residue protein sequence, read N- to C-terminus: Tyrosine-protein kinase-like otk (1033 aa).

The signal sequence occupies residues 1-22 (MTARMISIYGLVLASMMASVWA). Residues 23–581 (SSSRFQRLPQ…GGDGFLVTRA (559 aa)) lie on the Extracellular side of the membrane. Ig-like C2-type domains are found at residues 25-108 (SRFQ…REAS), 109-199 (PPAK…RVMS), 251-365 (PEDL…LPIS), 368-463 (PGVL…VAIN), and 468-558 (PKFS…VQLV). The N-linked (GlcNAc...) asparagine glycan is linked to Asn-39. 4 cysteine pairs are disulfide-bonded: Cys-46–Cys-95, Cys-137–Cys-188, Cys-276–Cys-354, and Cys-399–Cys-447. 7 N-linked (GlcNAc...) asparagine glycosylation sites follow: Asn-336, Asn-417, Asn-429, Asn-444, Asn-457, Asn-512, and Asn-524. A disulfide bond links Cys-490 and Cys-542. A helical membrane pass occupies residues 582–602 (VLITMTVALAYIVLVVGLMLW). The Cytoplasmic portion of the chain corresponds to 603–1033 (CRYRRQARKA…LSKAMQSVEK (431 aa)). Disordered stretches follow at residues 617-679 (LSTK…KKSA) and 718-760 (SPTD…KTSM). Residues 655–673 (KSSGDAQKSDDTACSQQSR) show a composition bias toward polar residues. Position 678 is a phosphoserine (Ser-678). Positions 692–1028 (LSELIQIGRG…QLGAALSKAM (337 aa)) constitute a Protein kinase; inactive domain. Positions 720–731 (TDKDADTEKQHS) are enriched in basic and acidic residues.

This sequence belongs to the protein kinase superfamily. Tyr protein kinase family. Insulin receptor subfamily. Interacts with plexA; component of a receptor complex that mediates the repulsive signaling in response to Semaphorin ligands.

The protein localises to the cell membrane. In terms of biological role, acts as a calcium-dependent, homophilic cell adhesion molecule that regulates neural recognition during the development of the nervous system. Component of the repulsive Plexin signaling response to regulate motor axon guidance at the embryonic stage. Also component of a receptor complex that is required in the adult visual system to innervate the lamina layer; specific targeting of R1-R6 axons. This Drosophila erecta (Fruit fly) protein is Tyrosine-protein kinase-like otk.